Reading from the N-terminus, the 358-residue chain is Photosystem II protein D1 3 (358 aa).

The next 3 membrane-spanning stretches (helical) occupy residues 28-45, 117-132, and 141-155; these read YIGW…AATT, HFLI…QWEL, and WICV…AAMA. His-117 serves as a coordination point for chlorophyll a. Position 125 (Tyr-125) interacts with pheophytin a. 2 residues coordinate [CaMn4O5] cluster: Asp-169 and Glu-188. A helical transmembrane segment spans residues 196–217; sequence FHMLGVAGVFGGSLFSAMHGSL. His-197 contributes to the chlorophyll a binding site. Residues His-214 and 263-264 each bind a quinone; that span reads SF. His-214 provides a ligand contact to Fe cation. His-271 lines the Fe cation pocket. Residues 273 to 287 form a helical membrane-spanning segment; it reads LLGAWPVVGIWFTSM. [CaMn4O5] cluster-binding residues include His-331, Glu-332, Asp-341, and Ala-343. Positions 344–358 are excised as a propeptide; that stretch reads TVESTPVALQAPAIG.

Belongs to the reaction center PufL/M/PsbA/D family. PSII is composed of 1 copy each of membrane proteins PsbA, PsbB, PsbC, PsbD, PsbE, PsbF, PsbH, PsbI, PsbJ, PsbK, PsbL, PsbM, PsbT, PsbX, PsbY, PsbZ, Psb30/Ycf12, peripheral proteins PsbO, CyanoQ (PsbQ), PsbU, PsbV and a large number of cofactors. It forms dimeric complexes. Requires The D1/D2 heterodimer binds P680, chlorophylls that are the primary electron donor of PSII, and subsequent electron acceptors. It shares a non-heme iron and each subunit binds pheophytin, quinone, additional chlorophylls, carotenoids and lipids. D1 provides most of the ligands for the Mn4-Ca-O5 cluster of the oxygen-evolving complex (OEC). There is also a Cl(-1) ion associated with D1 and D2, which is required for oxygen evolution. The PSII complex binds additional chlorophylls, carotenoids and specific lipids. as cofactor. In terms of processing, tyr-160 forms a radical intermediate that is referred to as redox-active TyrZ, YZ or Y-Z. Post-translationally, C-terminally processed by CtpA; processing is essential to allow assembly of the oxygen-evolving complex and thus photosynthetic growth.

The protein resides in the cellular thylakoid membrane. The catalysed reaction is 2 a plastoquinone + 4 hnu + 2 H2O = 2 a plastoquinol + O2. Its function is as follows. Photosystem II (PSII) is a light-driven water:plastoquinone oxidoreductase that uses light energy to abstract electrons from H(2)O, generating O(2) and a proton gradient subsequently used for ATP formation. It consists of a core antenna complex that captures photons, and an electron transfer chain that converts photonic excitation into a charge separation. The D1/D2 (PsbA/PsbD) reaction center heterodimer binds P680, the primary electron donor of PSII as well as several subsequent electron acceptors. The polypeptide is Photosystem II protein D1 3 (Synechococcus sp. (strain CC9311)).